The chain runs to 237 residues: Homeobox protein Nkx-3.1 (237 aa).

Over residues 1–14 the composition is skewed to basic and acidic residues; sequence MLRVAEPREPRVEA. Disordered stretches follow at residues 1 to 96 and 108 to 130; these read MLRV…EPES and EHNPGDLASAPQVTKQPQKRSRA. Residues 24–34 are compositionally biased toward polar residues; it reads PTQSKRLTSFL. Basic and acidic residues-rich tracts occupy residues 38–47 and 57–71; these read ILRDRAERHG and PDPRRDSAPEPDKAG. Positions 125–184 form a DNA-binding region, homeobox; the sequence is QKRSRAAFSHTQVIELERKFSHQKYLSAPERAHLAKNLKLTETQVKIWFQNRRYKTKRKQ.

This sequence belongs to the NK-3 homeobox family. Interacts with serum response factor (SRF). Interacts with SPDEF. Interacts with WDR77. Interacts with TOPORS which polyubiquitinates NKX3-1 and induces its proteasomal degradation. Interacts with FEM1B. Ubiquitinated by TOPORS; monoubiquitinated at several residues and also polyubiquitinated on single residues. Expressed mostly in the male urogenital tract, with highest expression in the epithelial cells lining the ducts of anterior, dorsolateral and ventral prostate and in the bulbourethral gland, and much lower in the seminal vesicle and the testis. Expression in the prostate increases during sexual maturation and is drastically reduced following castration. Expressed also in brain (hippocampus and external granular layer of the cerebral cortex), kidney (intralobular arteries), thymus and adrenal and salivary glands.

It localises to the nucleus. Its function is as follows. Transcription factor, which binds preferentially the consensus sequence 5'-TAAGT[AG]-3' and can behave as a transcriptional repressor. Plays an important role in normal prostate development, regulating proliferation of glandular epithelium and in the formation of ducts in prostate. Acts as a tumor suppressor controlling prostate carcinogenesis, as shown by the ability to suppress growth and tumorigenicity of prostate carcinoma cells. Plays a role in the formation of minor salivary glands (particularly palatine and lingual glands). This is Homeobox protein Nkx-3.1 from Mus musculus (Mouse).